We begin with the raw amino-acid sequence, 875 residues long: Protein SEY1 (875 aa).

Over 1-749 (MVANGHFASN…KRSAIGGITQ (749 aa)) the chain is Cytoplasmic. The GB1/RHD3-type G domain occupies 49-307 (GFNYHLISVF…IPADGFAVYA (259 aa)). Position 59–66 (59–66 (GSQSTGKS)) interacts with GTP. The stretch at 482–506 (SNYQQELSLYQKDLERISGQLRRDE) forms a coiled coil. Residues 676-704 (LDKWIGHTPSSATPADEEDLTPIGGVDED) form a disordered region. Acidic residues predominate over residues 690–704 (ADEEDLTPIGGVDED). A helical membrane pass occupies residues 750–770 (VPLYFYGLLLALGWNEIMAVL). Topologically, residues 771-773 (RNP) are lumenal. Residues 774 to 794 (AYFFLLFVCAIGAYVTYQLNL) form a helical membrane-spanning segment. The Cytoplasmic segment spans residues 795–875 (WGPIIKMTEA…ADDDDVDDDF (81 aa)). The disordered stretch occupies residues 831–875 (MAMSGARNATEEHEMSNLNRKSGERGGQKYRGEDVADDDDVDDDF). Residues 839-864 (ATEEHEMSNLNRKSGERGGQKYRGED) show a composition bias toward basic and acidic residues. Positions 865 to 875 (VADDDDVDDDF) are enriched in acidic residues.

This sequence belongs to the TRAFAC class dynamin-like GTPase superfamily. GB1/RHD3 GTPase family. RHD3 subfamily.

The protein resides in the endoplasmic reticulum membrane. Cooperates with the reticulon proteins and tubule-shaping DP1 family proteins to generate and maintain the structure of the tubular endoplasmic reticulum network. Has GTPase activity, which is required for its function in ER organization. In Ajellomyces dermatitidis (strain ER-3 / ATCC MYA-2586) (Blastomyces dermatitidis), this protein is Protein SEY1.